Consider the following 255-residue polypeptide: Zinc D-Ala-D-Ala carboxypeptidase (255 aa).

The N-terminal stretch at 1–42 is a signal peptide; that stretch reads MRPRPIRLLLTALVGAGLAFAPVSAVAAPTATASASADVGAL. A Blocked amino end (Asp) modification is found at aspartate 43. 2 cysteine pairs are disulfide-bonded: cysteine 45/cysteine 123 and cysteine 136/cysteine 184. Arginine 180 lines the substrate pocket. Zn(2+) is bound at residue histidine 196. A disulfide bond links cysteine 212 and cysteine 253. Histidine 234 serves as the catalytic Proton donor. Histidine 237 and histidine 239 together coordinate Zn(2+).

The protein belongs to the peptidase M15 family. Zn(2+) serves as cofactor. Post-translationally, the N-terminus is partially blocked as a result of the cyclization of the first two amino acids into anhydroaspartylglycine imide.

The protein resides in the secreted. It catalyses the reaction Cleavage of the bond: (Ac)2-L-lysyl-D-alanyl-|-D-alanine.. Functionally, this enzyme catalyzes carboxypeptidation and transpeptidation reactions involved in bacterial cell wall metabolism. It effectively catalyzes the transfer of the N-alpha, N-epsilon-diacetyl-L-lysyl-D-alanyl electrophilic group of the standard tripeptide substrate N-alpha,N-epsilon-diacetyl-L-lysyl-D-alanyl-D-alanine to water. It also performs a weak beta-lactamase activity, hydrolyzing penicillin into penicilloate at a very low rate. The polypeptide is Zinc D-Ala-D-Ala carboxypeptidase (Streptomyces albus G).